The sequence spans 156 residues: ATP synthase subunit b (156 aa).

A helical membrane pass occupies residues 13 to 33 (AFIIFVWFCMKFVWPPLMNAI).

The protein belongs to the ATPase B chain family. F-type ATPases have 2 components, F(1) - the catalytic core - and F(0) - the membrane proton channel. F(1) has five subunits: alpha(3), beta(3), gamma(1), delta(1), epsilon(1). F(0) has three main subunits: a(1), b(2) and c(10-14). The alpha and beta chains form an alternating ring which encloses part of the gamma chain. F(1) is attached to F(0) by a central stalk formed by the gamma and epsilon chains, while a peripheral stalk is formed by the delta and b chains.

It is found in the cell inner membrane. F(1)F(0) ATP synthase produces ATP from ADP in the presence of a proton or sodium gradient. F-type ATPases consist of two structural domains, F(1) containing the extramembraneous catalytic core and F(0) containing the membrane proton channel, linked together by a central stalk and a peripheral stalk. During catalysis, ATP synthesis in the catalytic domain of F(1) is coupled via a rotary mechanism of the central stalk subunits to proton translocation. In terms of biological role, component of the F(0) channel, it forms part of the peripheral stalk, linking F(1) to F(0). The protein is ATP synthase subunit b of Shewanella woodyi (strain ATCC 51908 / MS32).